A 284-amino-acid polypeptide reads, in one-letter code: Nucleotide-binding protein Teth39_0666 (284 aa).

8–15 (GLSGAGKT) is an ATP binding site. 58 to 61 (DLRG) serves as a coordination point for GTP.

It belongs to the RapZ-like family.

Displays ATPase and GTPase activities. The chain is Nucleotide-binding protein Teth39_0666 from Thermoanaerobacter pseudethanolicus (strain ATCC 33223 / 39E) (Clostridium thermohydrosulfuricum).